A 144-amino-acid chain; its full sequence is Small polypeptide DEVIL 15 (144 aa).

Asparagine 8 is a glycosylation site (N-linked (GlcNAc...) asparagine). Positions 22–63 (SSSSKPFFTRSFSTKTSSSPSSKSHFTRSFSTKPSSSSSSSD) are disordered. A helical transmembrane segment spans residues 104 to 120 (ILSKKGASVTGKCFKVA). A required for DVL/RTFL small polypeptide activity region spans residues 111–142 (SVTGKCFKVAKEHKSRFYIIKRCVLMLVCWHK).

The protein belongs to the DVL/RTFL small polypeptides family.

Its subcellular location is the cell membrane. In terms of biological role, small polypeptide acting as a regulatory molecule which coordinates cellular responses required for differentiation, growth and development, probably by restricting polar cell proliferation in lateral organs and coordinating socket cell recruitment and differentiation at trichome sites. The polypeptide is Small polypeptide DEVIL 15 (Arabidopsis thaliana (Mouse-ear cress)).